Reading from the N-terminus, the 535-residue chain is MCLEPISLVVFGSLVFFFGLVKYFKRGERQRTRGILQPEYKDKYYYSKEKGEEMGEVANVNEIPVKIRNHKYPAKEHNLRVKDLLLNRNPKLSKISTAFFIAGEELEGNKYCDTNKDFRQNRYFYHLSGVDIPASAILFNCSTDKLTLFLPNIDEEDVIWSGMPLSLDEAMRVFDIDEALYISDLGKKFKELQDFAIFTTDLDNVHDENIARSLIPSDPNFFYAMDETRAIKDWYEIESIRKACQISDKSHLAVMSALPIELNELQIQAEFEYHATRQGGRSLGYDPICCSGPACGTLHYVKNSEDIKGKHSILIDAGAEWRQYTSDITRCFPTSGKFTAEHREVYETVLDMQNQAMERIKPGAKWDDLHALTHKVLIKHFLSMGIFKKEFSEDEIFKRRASCAFYPHGLGHMLGLDVHDVGGNPNYDDPDPMFRYLRIRRPLKENMVITNEPGCYFNQFLIKEFLEKHPERLEVVDMSVLKRYMYVGGVRIEDDILVTKDGYENLTGITSDPDEIEKIVQKGLKKPRSGFHVIV.

The chain crosses the membrane as a helical span at residues 8-24 (LVVFGSLVFFFGLVKYF). Lys-50 participates in a covalent cross-link: Glycyl lysine isopeptide (Lys-Gly) (interchain with G-Cter in ubiquitin). Mn(2+) is bound by residues Asp-316, Asp-327, His-412, Glu-452, and Glu-493.

This sequence belongs to the peptidase M24B family. Mn(2+) is required as a cofactor.

The protein localises to the membrane. This is an uncharacterized protein from Saccharomyces cerevisiae (strain ATCC 204508 / S288c) (Baker's yeast).